A 546-amino-acid polypeptide reads, in one-letter code: Acyl-CoA ligase oryP (546 aa).

ATP-binding positions include 166 to 174 (TSGTTGAPK), 300 to 305 (QFWLNL), and Arg403. CoA contacts are provided by residues 412-414 (WDH) and 482-484 (LLR). Lys499 is a binding site for ATP.

It belongs to the ATP-dependent AMP-binding enzyme family.

Its pathway is secondary metabolite biosynthesis. Acyl-CoA ligase; part of the gene cluster that mediates the biosynthesis of oryzines, natural products with an unusual maleidride backbone. The two subunits of the fungal fatty acid synthase oryfasA and oryfasB probably form octenoic acid. This fatty acid is most likely activated by the acyl-CoA ligase oryP to give octenyl-CoA before the citrate synthase-like protein oryE catalyzes condensation with oxaloacetate to form tricarboxylic acid. The next steps of the pathways are conjectural, but a favorite possible route has been proposed, beginning with decarboxylation and concomitant dehydration by the decarboxylase oryM, followed by tautomerization, which may lead to the production of a diene intermediate. Reduction of this diene intermediate could give the known metabolite piliformic acid. On the pathway to oryzine B and oryzine A, however, hydroxylation of the diene by the alpha-ketoglutarate-dependent dioxygenase oryG and lactonisation by the lactonohydrolases oryH or oryL could give oryzine B directly. Finally, enoyl reduction by the dehydrogenase oryD would then convert oryzine B into oryzine A. The polypeptide is Acyl-CoA ligase oryP (Aspergillus oryzae (strain ATCC 42149 / RIB 40) (Yellow koji mold)).